Here is a 205-residue protein sequence, read N- to C-terminus: Cytochrome c biogenesis ATP-binding export protein CcmA 1 (205 aa).

The region spanning 2–205 is the ABC transporter domain; the sequence is LEARDLYCER…LALTGGGAGL (204 aa). Residue 34-41 participates in ATP binding; sequence GGNGAGKT.

It belongs to the ABC transporter superfamily. CcmA exporter (TC 3.A.1.107) family. As to quaternary structure, the complex is composed of two ATP-binding proteins (CcmA) and two transmembrane proteins (CcmB).

The protein resides in the cell inner membrane. The catalysed reaction is heme b(in) + ATP + H2O = heme b(out) + ADP + phosphate + H(+). Its function is as follows. Part of the ABC transporter complex CcmAB involved in the biogenesis of c-type cytochromes; once thought to export heme, this seems not to be the case, but its exact role is uncertain. Responsible for energy coupling to the transport system. The sequence is that of Cytochrome c biogenesis ATP-binding export protein CcmA 1 from Salmonella typhimurium (strain LT2 / SGSC1412 / ATCC 700720).